We begin with the raw amino-acid sequence, 259 residues long: MTDLKASSLRALKLMDLTTLNDDDTNEKVIALCHQAKTPVGNTAAICIYPRFIPIARKTLKEQGTPDIRIATVTNFPHGNDDIDIALAETRAAIAYGADEVDVVFPYRALIAGNEQVGFDLVKACKDACAAANVLLKVIIETGELKEEALIRKASEISIKAGADFIKTSTGKVPVNATPESARIMMEVIRDMGVSKTVGFKPAGGVRTAEDAQKFLAIADELFGANWADSRHYRFGASSLLASLLKALGHGDGKSASSY.

The active-site Proton donor/acceptor is Asp102. Catalysis depends on Lys167, which acts as the Schiff-base intermediate with acetaldehyde. Residue Lys201 is the Proton donor/acceptor of the active site.

This sequence belongs to the DeoC/FbaB aldolase family. DeoC type 2 subfamily.

It is found in the cytoplasm. It catalyses the reaction 2-deoxy-D-ribose 5-phosphate = D-glyceraldehyde 3-phosphate + acetaldehyde. The protein operates within carbohydrate degradation; 2-deoxy-D-ribose 1-phosphate degradation; D-glyceraldehyde 3-phosphate and acetaldehyde from 2-deoxy-alpha-D-ribose 1-phosphate: step 2/2. Functionally, catalyzes a reversible aldol reaction between acetaldehyde and D-glyceraldehyde 3-phosphate to generate 2-deoxy-D-ribose 5-phosphate. The protein is Deoxyribose-phosphate aldolase of Salmonella typhi.